We begin with the raw amino-acid sequence, 122 residues long: Small ribosomal subunit protein uS13 (122 aa).

The disordered stretch occupies residues 92–122; it reads HRKQLPVRGQRTHTNARTRKGKAKPIAGKKK.

This sequence belongs to the universal ribosomal protein uS13 family. As to quaternary structure, part of the 30S ribosomal subunit. Forms a loose heterodimer with protein S19. Forms two bridges to the 50S subunit in the 70S ribosome.

Its function is as follows. Located at the top of the head of the 30S subunit, it contacts several helices of the 16S rRNA. In the 70S ribosome it contacts the 23S rRNA (bridge B1a) and protein L5 of the 50S subunit (bridge B1b), connecting the 2 subunits; these bridges are implicated in subunit movement. Contacts the tRNAs in the A and P-sites. The chain is Small ribosomal subunit protein uS13 from Methylobacterium radiotolerans (strain ATCC 27329 / DSM 1819 / JCM 2831 / NBRC 15690 / NCIMB 10815 / 0-1).